Here is a 1032-residue protein sequence, read N- to C-terminus: Probable ATP-dependent RNA helicase DDX46 (1032 aa).

Residues 1 to 24 (MGRESRHYRKRSASRGRSGSRSRS) show a composition bias toward basic residues. A disordered region spans residues 1–227 (MGRESRHYRK…TEMEDEELDP (227 aa)). Residue Gly-2 is the site of N-myristoyl glycine attachment. Over residues 26-49 (SPSDKRSKRGDDRRSRSRDRDRRR) the composition is skewed to basic and acidic residues. 2 stretches are compositionally biased toward basic residues: residues 50-73 (ERSR…RSRS) and 81-103 (ERRR…RRSR). Residues 112 to 200 (KKTENRSRSK…EMKQGKKWSL (89 aa)) are compositionally biased toward basic and acidic residues. A coiled-coil region spans residues 152–197 (DQNKLEEEMRKRKERVEKWREEQRKKAMENIGELKKEIEEMKQGKK). Residue Lys-186 forms a Glycyl lysine isopeptide (Lys-Gly) (interchain with G-Cter in SUMO2) linkage. At Ser-199 the chain carries Phosphoserine. The span at 201–211 (EDDDDDEDDPA) shows a compositional bias: acidic residues. At Lys-263 the chain carries N6-acetyllysine. Phosphotyrosine is present on Tyr-294. Ser-295 and Ser-296 each carry phosphoserine. Residue Lys-325 forms a Glycyl lysine isopeptide (Lys-Gly) (interchain with G-Cter in SUMO2) linkage. Phosphoserine is present on Ser-346. The Q motif motif lies at 372–400 (KSWVQCGISMKILNSLKKHGYEKPTPIQT). One can recognise a Helicase ATP-binding domain in the interval 403–581 (IPAIMSGRDL…RRILSKPIEV (179 aa)). 416-423 (AKTGSGKT) is a binding site for ATP. Positions 529 to 532 (DEAD) match the DEAD box motif. The Helicase C-terminal domain maps to 592 to 753 (DVEQQVIVIE…AVPPDLEKLW (162 aa)). The residue at position 776 (Lys-776) is an N6-acetyllysine. A Glycyl lysine isopeptide (Lys-Gly) (interchain with G-Cter in SUMO2) cross-link involves residue Lys-779. Ser-804 is modified (phosphoserine). The residue at position 904 (Lys-904) is an N6-acetyllysine. Glycyl lysine isopeptide (Lys-Gly) (interchain with G-Cter in SUMO2) cross-links involve residues Lys-908 and Lys-916. Phosphoserine is present on Ser-929.

Belongs to the DEAD box helicase family. DDX46/PRP5 subfamily. In terms of assembly, component of the 17S U2 SnRNP complex, a ribonucleoprotein complex that contains small nuclear RNA (snRNA) U2 and a number of specific proteins. Within the 17S U2 SnRNP complex, DDX46 is part of the SF3B subcomplex, which is required for 'A' complex assembly formed by the stable binding of U2 snRNP to the branchpoint sequence in pre-mRNA. Recruited to the 17S U2 SnRNP complex following release of DDX42; DDX42 and DDX46 bind the SF3B subcomplex in a competitive manner.

It is found in the nucleus speckle. It localises to the nucleus. The protein resides in the cajal body. The catalysed reaction is ATP + H2O = ADP + phosphate + H(+). Component of the 17S U2 SnRNP complex of the spliceosome, a large ribonucleoprotein complex that removes introns from transcribed pre-mRNAs. The 17S U2 SnRNP complex (1) directly participates in early spliceosome assembly and (2) mediates recognition of the intron branch site during pre-mRNA splicing by promoting the selection of the pre-mRNA branch-site adenosine, the nucleophile for the first step of splicing. Within the 17S U2 SnRNP complex, DDX46 plays essential roles during assembly of pre-spliceosome and proofreading of the branch site. This chain is Probable ATP-dependent RNA helicase DDX46 (Ddx46), found in Mus musculus (Mouse).